A 467-amino-acid polypeptide reads, in one-letter code: MALSRIYSSKLASANKNLLPVITTYVRNASDSTDLKAVLSEKIPKEQERVKNFRKQFGATKVGEVTVDMMYGGMRGIKGLVCETSVLDPDEGIRFRGLSIPECQKVLPKAPGGAEPLPEGLFWLLITGDVPTKAQVDALSREWANRAALPSHVVTMLNNMPTTLHPMSQLSCAVTALNHESKYAKAYSEGVHKSKYWEYVYEDSMDLIAKLPVVAATIYRNTYRDGKGIGAIDPKKDWSANFTKMLGYEDEQFTELMRLYLTIHSDHEGGNVSAHTVHLVGSALSDPYLSFAAGMNGLAGPLHGLANQEVLVWLQKLRKELGDNASEDKVKDFIWKTLKSGQVVPGYGHAVLRKTDPRYTCQREFALKHLPNDPLFQLVSNIYKVVPPILTELGKVKNPWPNVDAHSGVLLQYYGLKEMNYYTVLFGVSRALGVLASLVWDRALGLPIERPKSMSTDGLMKAVGAAK.

Catalysis depends on residues His303, His349, and Asp404.

The protein belongs to the citrate synthase family. In terms of assembly, homodimer.

The protein resides in the mitochondrion matrix. It carries out the reaction oxaloacetate + acetyl-CoA + H2O = citrate + CoA + H(+). Its pathway is carbohydrate metabolism; tricarboxylic acid cycle; isocitrate from oxaloacetate: step 1/2. This chain is Probable citrate synthase 2, mitochondrial, found in Aedes aegypti (Yellowfever mosquito).